Reading from the N-terminus, the 164-residue chain is FMN reductase (NADH) RutF (164 aa).

It belongs to the non-flavoprotein flavin reductase family. RutF subfamily.

It carries out the reaction FMNH2 + NAD(+) = FMN + NADH + 2 H(+). In terms of biological role, catalyzes the reduction of FMN to FMNH2 which is used to reduce pyrimidine by RutA via the Rut pathway. The sequence is that of FMN reductase (NADH) RutF from Shigella flexneri serotype X (strain 2002017).